The chain runs to 262 residues: Hydroxyethylthiazole kinase (262 aa).

Met43 contacts substrate. 2 residues coordinate ATP: Arg118 and Thr164. Ala191 is a substrate binding site.

Belongs to the Thz kinase family. It depends on Mg(2+) as a cofactor.

The enzyme catalyses 5-(2-hydroxyethyl)-4-methylthiazole + ATP = 4-methyl-5-(2-phosphooxyethyl)-thiazole + ADP + H(+). It functions in the pathway cofactor biosynthesis; thiamine diphosphate biosynthesis; 4-methyl-5-(2-phosphoethyl)-thiazole from 5-(2-hydroxyethyl)-4-methylthiazole: step 1/1. Catalyzes the phosphorylation of the hydroxyl group of 4-methyl-5-beta-hydroxyethylthiazole (THZ). The chain is Hydroxyethylthiazole kinase from Cereibacter sphaeroides (strain KD131 / KCTC 12085) (Rhodobacter sphaeroides).